A 447-amino-acid chain; its full sequence is N-succinylarginine dihydrolase (447 aa).

Substrate is bound by residues 19-28 (AGLSFGNEAS), Asn-110, and 137-138 (HR). Glu-174 is an active-site residue. Substrate is bound at residue Arg-212. Residue His-248 is part of the active site. Asp-250 and Asn-359 together coordinate substrate. Catalysis depends on Cys-365, which acts as the Nucleophile.

Belongs to the succinylarginine dihydrolase family. In terms of assembly, homodimer.

It catalyses the reaction N(2)-succinyl-L-arginine + 2 H2O + 2 H(+) = N(2)-succinyl-L-ornithine + 2 NH4(+) + CO2. The protein operates within amino-acid degradation; L-arginine degradation via AST pathway; L-glutamate and succinate from L-arginine: step 2/5. Catalyzes the hydrolysis of N(2)-succinylarginine into N(2)-succinylornithine, ammonia and CO(2). This is N-succinylarginine dihydrolase from Escherichia coli O6:K15:H31 (strain 536 / UPEC).